Here is a 1446-residue protein sequence, read N- to C-terminus: ABC transporter G family member 53 (1446 aa).

The ABC transporter 1 domain occupies 153-426 (ANTLHITPNR…FESVGFKCPE (274 aa)). 186-193 (GPPGAGKT) serves as a coordination point for ATP. The 214-residue stretch at 504-717 (ELLKANIDRE…AQNAISVNEF (214 aa)) folds into the ABC transmembrane type-2 1 domain. 6 helical membrane-spanning segments follow: residues 523 to 543 (VYIFKATQLTLMTFIAMTVFI), 555 to 575 (GGIYMGALFFGILMIMFNGLA), 610 to 630 (TPLSLLNVTIWVFITYYVIGF), 641 to 661 (FLLLLVMNETSSGLFRFIAGF), 666 to 686 (VVASTMGSFCILIFMLLGGFI), and 752 to 772 (IGVGALLGYVLLFNILYTICL). Residues 849–1101 (ITFEDIRYSV…ELIRYFESIE (253 aa)) form the ABC transporter 2 domain. 894 to 901 (GVSGAGKT) contributes to the ATP binding site. The region spanning 1174–1388 (TQCLACLWKQ…TLYGLVTSQF (215 aa)) is the ABC transmembrane type-2 2 domain. 7 consecutive transmembrane segments (helical) span residues 1195–1215 (AVKYFYTIVIALLFGTMFWGV), 1225–1242 (LFNAMGSMYASVLFMGVQ), 1281–1301 (LPYILVQSLIYGVLVYAMIGF), 1308–1328 (FFWYLFFMYFTLSYYTFYGMM), 1338–1358 (VASVVSTAFYAIWNLFSGFII), 1363–1383 (IPIWWRWYYWVCPVAWTLYGL), and 1415–1435 (FLWVVAVMVVSFAVLFAFLFG).

The protein belongs to the ABC transporter superfamily. ABCG family. PDR (TC 3.A.1.205) subfamily.

The protein localises to the membrane. May be a general defense protein. In Oryza sativa subsp. japonica (Rice), this protein is ABC transporter G family member 53.